The sequence spans 236 residues: 2-C-methyl-D-erythritol 4-phosphate cytidylyltransferase (236 aa).

It belongs to the IspD/TarI cytidylyltransferase family. IspD subfamily. In terms of assembly, homodimer.

The enzyme catalyses 2-C-methyl-D-erythritol 4-phosphate + CTP + H(+) = 4-CDP-2-C-methyl-D-erythritol + diphosphate. It functions in the pathway isoprenoid biosynthesis; isopentenyl diphosphate biosynthesis via DXP pathway; isopentenyl diphosphate from 1-deoxy-D-xylulose 5-phosphate: step 2/6. Catalyzes the formation of 4-diphosphocytidyl-2-C-methyl-D-erythritol from CTP and 2-C-methyl-D-erythritol 4-phosphate (MEP). The chain is 2-C-methyl-D-erythritol 4-phosphate cytidylyltransferase from Salmonella paratyphi B (strain ATCC BAA-1250 / SPB7).